The primary structure comprises 398 residues: MGSDDTGGLFKWTIDALFNRDTSPSTMYDKQLQQDSFDEEIYSRPRASSFSDPDIYSKYELLRDEDEPDLLRPVSMNGLPYEKQDTNTFHARRARERRVQETPNIRRAPNPNDPIISKLFQVDEDDSQLNTNEMRSQREKFNTGRLPGKFPSPTKQYNARISNRDAFTGAERKAASTAPAIPPVAPSVQNLDYTPEYVKLMDKLSLNNKELRDLKVDVRERQKHGMEKETELKKKYLQIRQELIQELKQSKMIYDNYCKLYYKYKGVKRSIQLPTQTLASNSSMLDKIASLEKQIVDLSIEKDRLKKKSEERILSVELQKKELENKFEVERMIYERRIKDLEEKLYVHEHPIRPATDTSPVSSSSFMPHTQETSDSTASPYKEYNNTIDTQFLRNLVK.

Positions 93 to 115 (RARERRVQETPNIRRAPNPNDPI) are disordered. The stretch at 201–350 (MDKLSLNNKE…LEEKLYVHEH (150 aa)) forms a coiled coil. Residues 351 to 382 (PIRPATDTSPVSSSSFMPHTQETSDSTASPYK) form a disordered region. Over residues 356-382 (TDTSPVSSSSFMPHTQETSDSTASPYK) the composition is skewed to polar residues.

This sequence belongs to the BBP1 family. As to quaternary structure, homodimer.

The protein resides in the cytoplasm. It is found in the cytoskeleton. The protein localises to the microtubule organizing center. It localises to the spindle pole body. Component of the spindle pole body (SPB) required for insertion of the nascent SPB into the nuclear envelope and for the proper execution of spindle pole body (SPB) duplication. Connects the central plaque of the SPB with the half-bridge. Required for proper localization of CDC5 at the SPB and for proper M-phase progression. This Kluyveromyces lactis (strain ATCC 8585 / CBS 2359 / DSM 70799 / NBRC 1267 / NRRL Y-1140 / WM37) (Yeast) protein is Spindle pole component BBP1 (BBP1).